A 131-amino-acid polypeptide reads, in one-letter code: Global transcriptional regulator Spx 2 (131 aa).

The cysteines at positions 10 and 13 are disulfide-linked.

Belongs to the ArsC family. Spx subfamily. In terms of assembly, interacts with the C-terminal domain of the alpha subunit of the RNAP.

It localises to the cytoplasm. Global transcriptional regulator that plays a key role in stress response and exerts either positive or negative regulation of genes. Acts by interacting with the C-terminal domain of the alpha subunit of the RNA polymerase (RNAP). This interaction can enhance binding of RNAP to the promoter region of target genes and stimulate their transcription, or block interaction of RNAP with activator. The sequence is that of Global transcriptional regulator Spx 2 from Bacillus anthracis.